Reading from the N-terminus, the 45-residue chain is Somatoliberin (45 aa).

Belongs to the glucagon family.

It is found in the secreted. Its function is as follows. GRF is released by the hypothalamus and acts on the adenohypophyse to stimulate the secretion of growth hormone. This is Somatoliberin (ghrh) from Cyprinus carpio (Common carp).